The primary structure comprises 813 residues: Striatin-interacting protein 1 homolog (813 aa).

Disordered regions lie at residues 1–41 (MDGV…SEAP) and 307–379 (RAAS…RDEV). Positions 9–18 (NNKQKQNQML) are enriched in polar residues. The span at 22-35 (MRGEFTRNQRKDSE) shows a compositional bias: basic and acidic residues. Residues 307–316 (RAASPPASAS) show a composition bias toward low complexity. The residue at position 310 (Ser-310) is a Phosphoserine. The span at 331-352 (KALIKQDNLDTFNEKDPYKADD) shows a compositional bias: basic and acidic residues. Acidic residues predominate over residues 353–367 (SHEDEEENDDNDNSL).

Belongs to the STRIP family. Part of the core of STRIPAK complexes composed of PP2A catalytic and scaffolding subunits, the striatins (PP2A regulatory subunits), the striatin-associated proteins MOB4, STRIP1 and STRIP2, PDCD10 and members of the STE20 kinases, such as STK24 and STK26.

It is found in the cytoplasm. Plays a role in the regulation of cell morphology and cytoskeletal organization. Required in the cortical actin filament dynamics and cell shape. Part of the striatin-interacting phosphatase and kinase (STRIPAK) complexes. STRIPAK complexes have critical roles in protein (de)phosphorylation and are regulators of multiple signaling pathways including Hippo, MAPK, nuclear receptor and cytoskeleton remodeling. Different types of STRIPAK complexes are involved in a variety of biological processes such as cell growth, differentiation, apoptosis, metabolism and immune regulation. This is Striatin-interacting protein 1 homolog (strip1) from Danio rerio (Zebrafish).